The primary structure comprises 238 residues: MARGCLQGVKYLMFAFNLLFWLGGCGVLGVGIWLAATQGNFATLSSSFPSLSAANLLIVTGTFVMAIGFVGCIGALKENKCLLLTFFVLLLLVFLLEATIAVLFFAYSDKIDSYAQQDLKKGLHLYGTQGNVGLTNAWSIIQTDFRCCGVSNYTDWFEVYNATRVPDSCCLEFSDSCGLHEPGTWWKSPCYETVKAWLQENLLAVGIFGLCTALVQILGLTFAMTMYCQVVKADTYCA.

Topologically, residues 1 to 13 (MARGCLQGVKYLM) are cytoplasmic. Residues 14-34 (FAFNLLFWLGGCGVLGVGIWL) form a helical membrane-spanning segment. The Extracellular segment spans residues 35-55 (AATQGNFATLSSSFPSLSAAN). The chain crosses the membrane as a helical span at residues 56 to 76 (LLIVTGTFVMAIGFVGCIGAL). Over 77-85 (KENKCLLLT) the chain is Cytoplasmic. A helical transmembrane segment spans residues 86–106 (FFVLLLLVFLLEATIAVLFFA). Residues 107–201 (YSDKIDSYAQ…ETVKAWLQEN (95 aa)) are Extracellular-facing. N-linked (GlcNAc...) asparagine glycosylation is found at N152 and N161. The helical transmembrane segment at 202–222 (LLAVGIFGLCTALVQILGLTF) threads the bilayer. Topologically, residues 223–238 (AMTMYCQVVKADTYCA) are cytoplasmic.

The protein belongs to the tetraspanin (TM4SF) family. In terms of assembly, forms a complex with integrins.

Its subcellular location is the membrane. In Mus musculus (Mouse), this protein is Tetraspanin-4 (Tspan4).